Here is a 175-residue protein sequence, read N- to C-terminus: Ribosome maturation factor RimM (175 aa).

The PRC barrel domain maps to 98-172 (DGEFHVRDLQ…WLLITPPKGL (75 aa)).

It belongs to the RimM family. In terms of assembly, binds ribosomal protein uS19.

The protein localises to the cytoplasm. In terms of biological role, an accessory protein needed during the final step in the assembly of 30S ribosomal subunit, possibly for assembly of the head region. Essential for efficient processing of 16S rRNA. May be needed both before and after RbfA during the maturation of 16S rRNA. It has affinity for free ribosomal 30S subunits but not for 70S ribosomes. This Synechococcus sp. (strain RCC307) protein is Ribosome maturation factor RimM.